Here is a 281-residue protein sequence, read N- to C-terminus: L-ornithine N(alpha)-acyltransferase (281 aa).

Belongs to the acetyltransferase family. OlsB subfamily.

It catalyses the reaction a (3R)-hydroxyacyl-[ACP] + L-ornithine = a lyso-ornithine lipid + holo-[ACP] + H(+). It functions in the pathway lipid metabolism. Functionally, catalyzes the first step in the biosynthesis of ornithine lipids, which are phosphorus-free membrane lipids. Catalyzes the 3-hydroxyacyl-acyl carrier protein-dependent acylation of ornithine to form lyso-ornithine lipid (LOL). This Brucella abortus (strain 2308) protein is L-ornithine N(alpha)-acyltransferase.